We begin with the raw amino-acid sequence, 378 residues long: Ubiquitin-conjugating enzyme E2 Q2 (378 aa).

The segment at 126 to 152 (DQPLPTGQNGTTEEVTSEEEEEEEMAE) is disordered. Acidic residues predominate over residues 140-152 (VTSEEEEEEEMAE). One can recognise a UBC core domain in the interval 207–371 (QASDRLMKEL…VQIHEKNGWY (165 aa)). The active-site Glycyl thioester intermediate is cysteine 307.

The protein belongs to the ubiquitin-conjugating enzyme family. Auto-ubiquitinated in vitro.

The protein localises to the cytoplasm. It catalyses the reaction S-ubiquitinyl-[E1 ubiquitin-activating enzyme]-L-cysteine + [E2 ubiquitin-conjugating enzyme]-L-cysteine = [E1 ubiquitin-activating enzyme]-L-cysteine + S-ubiquitinyl-[E2 ubiquitin-conjugating enzyme]-L-cysteine.. It participates in protein modification; protein ubiquitination. Its function is as follows. Accepts ubiquitin from the E1 complex and catalyzes its covalent attachment to other proteins. In vitro catalyzes 'Lys-48'-linked polyubiquitination. This chain is Ubiquitin-conjugating enzyme E2 Q2 (Ube2q2), found in Mus musculus (Mouse).